We begin with the raw amino-acid sequence, 157 residues long: Transcription elongation factor GreA (157 aa).

Positions 1–75 form a coiled coil; that stretch reads MSKEIILTQE…VETLINRAKV (75 aa).

It belongs to the GreA/GreB family.

Functionally, necessary for efficient RNA polymerase transcription elongation past template-encoded arresting sites. The arresting sites in DNA have the property of trapping a certain fraction of elongating RNA polymerases that pass through, resulting in locked ternary complexes. Cleavage of the nascent transcript by cleavage factors such as GreA or GreB allows the resumption of elongation from the new 3'terminus. GreA releases sequences of 2 to 3 nucleotides. This chain is Transcription elongation factor GreA, found in Mycoplasma mycoides subsp. mycoides SC (strain CCUG 32753 / NCTC 10114 / PG1).